The chain runs to 165 residues: Transcription antitermination protein NusB (165 aa).

Belongs to the NusB family.

In terms of biological role, involved in transcription antitermination. Required for transcription of ribosomal RNA (rRNA) genes. Binds specifically to the boxA antiterminator sequence of the ribosomal RNA (rrn) operons. This is Transcription antitermination protein NusB from Chlorobium phaeobacteroides (strain DSM 266 / SMG 266 / 2430).